We begin with the raw amino-acid sequence, 747 residues long: MERTYQYAWIIPFVPLLVTMLIGLELLLNPTATKNIRRIWAFPAVLLLSIVMVFSTKLAIQQINGSSIYEYLWSWSITSDFSLEFGYLIDPLTSIMSILITTVGIMVLIYSDNYMSHDRGYLRFFAYMSFFNTAMLGLVTSPNLIQIHIFWELVGMCSYLLIGFWFTRPIAANACQKAFVTNRVGDFGLLLGILGFYLITGSFEFQDLFEIFNDSIINNNEINSSFATLCAFLLFLGAVAKSAQFPLHVWLPDAMEGPTPISALIHAATMVAAGIFLVARLLPLFIAIPYIMNIISLIGVITVLLGATLALAQRDIKRSLAYSTMSQLGYMMLALGIGSYRAALFHLITHAYSKALLFLGSGSIIHSMEPIVGYSPAKSQNMVLMGGLTKYMPITKTTFFLGTLSLCGIPPLACFWSKDEILNDSWLYSPIFAIIAFYTAGLTAFYMFRMYLLTFEGHLRSHFQNYSGHTNSSFYSISIWGQEGSKPVSSNLLLTTRNNNDKSSFSNCSFSNTYKIAGYVRTMRSSFSTHFLNKDSHTLLYPHESDNTMLFPLLILAIFTLFVGCIGIHFGHEVMEVDILSKWLTPSMKLFHQNSTDEDWYKFLTNAFYSVSIAYFGIFLASVLYGSVYSDRQNLYLINSFAKIDSKMRIRLEQIINVIYNWSYNRGYIDVYYEKVFIKGVRELAQLAHSFDRRVIDGVTNGIGVASFFLGEGIKYIGGGRISSYLFLYLACVSIVLLIYYYYNFLN.

16 helical membrane passes run 8–28, 39–59, 89–109, 125–145, 147–167, 185–205, 231–251, 259–279, 281–301, 328–348, 355–375, 397–417, 426–446, 550–570, 608–628, and 726–746; these read AWIIPFVPLLVTMLIGLELLL, IWAFPAVLLLSIVMVFSTKLA, IDPLTSIMSILITTVGIMVLI, FAYMSFFNTAMLGLVTSPNLI, IHIFWELVGMCSYLLIGFWFT, GDFGLLLGILGFYLITGSFEF, AFLLFLGAVAKSAQFPLHVWL, TPISALIHAATMVAAGIFLVA, LLPLFIAIPYIMNIISLIGVI, LGYMMLALGIGSYRAALFHLI, ALLFLGSGSIIHSMEPIVGYS, TTFFLGTLSLCGIPPLACFWS, WLYSPIFAIIAFYTAGLTAFY, LFPLLILAIFTLFVGCIGIHF, FYSVSIAYFGIFLASVLYGSV, and LFLYLACVSIVLLIYYYYNFL.

This sequence belongs to the complex I subunit 5 family. In terms of assembly, NDH is composed of at least 16 different subunits, 5 of which are encoded in the nucleus.

It localises to the plastid. Its subcellular location is the chloroplast thylakoid membrane. The catalysed reaction is a plastoquinone + NADH + (n+1) H(+)(in) = a plastoquinol + NAD(+) + n H(+)(out). It carries out the reaction a plastoquinone + NADPH + (n+1) H(+)(in) = a plastoquinol + NADP(+) + n H(+)(out). NDH shuttles electrons from NAD(P)H:plastoquinone, via FMN and iron-sulfur (Fe-S) centers, to quinones in the photosynthetic chain and possibly in a chloroplast respiratory chain. The immediate electron acceptor for the enzyme in this species is believed to be plastoquinone. Couples the redox reaction to proton translocation, and thus conserves the redox energy in a proton gradient. This Nymphaea alba (White water-lily) protein is NAD(P)H-quinone oxidoreductase subunit 5, chloroplastic (ndhF).